We begin with the raw amino-acid sequence, 218 residues long: Methylthioribulose-1-phosphate dehydratase (218 aa).

2 residues coordinate Zn(2+): histidine 107 and histidine 109.

The protein belongs to the aldolase class II family. MtnB subfamily. The cofactor is Zn(2+).

The catalysed reaction is 5-(methylsulfanyl)-D-ribulose 1-phosphate = 5-methylsulfanyl-2,3-dioxopentyl phosphate + H2O. The protein operates within amino-acid biosynthesis; L-methionine biosynthesis via salvage pathway; L-methionine from S-methyl-5-thio-alpha-D-ribose 1-phosphate: step 2/6. Catalyzes the dehydration of methylthioribulose-1-phosphate (MTRu-1-P) into 2,3-diketo-5-methylthiopentyl-1-phosphate (DK-MTP-1-P). In Xylella fastidiosa (strain M12), this protein is Methylthioribulose-1-phosphate dehydratase.